Reading from the N-terminus, the 192-residue chain is Adenylate kinase (192 aa).

Residue 10 to 18 (GVPGVGGTT) coordinates ATP.

Belongs to the archaeal adenylate kinase family. Monomer.

It is found in the cytoplasm. The catalysed reaction is AMP + ATP = 2 ADP. The chain is Adenylate kinase from Methanococcus maripaludis (strain DSM 14266 / JCM 13030 / NBRC 101832 / S2 / LL).